A 261-amino-acid polypeptide reads, in one-letter code: Small ribosomal subunit protein uS2 (261 aa).

An N-acetylserine modification is found at Ser-2. Residues 211-261 (EQNAAEDSKAEDAEEAPVADAEPDWSGETEDVDWAESGATPAAEEAAASNW) form a disordered region. Positions 222-244 (DAEEAPVADAEPDWSGETEDVDW) are enriched in acidic residues. Low complexity predominate over residues 245–261 (AESGATPAAEEAAASNW).

It belongs to the universal ribosomal protein uS2 family. As to quaternary structure, component of the small ribosomal subunit. Mature ribosomes consist of a small (40S) and a large (60S) subunit. The 40S subunit contains about 33 different proteins and 1 molecule of RNA (18S). The 60S subunit contains about 49 different proteins and 3 molecules of RNA (25S, 5.8S and 5S). Interacts with RPS21.

It is found in the cytoplasm. Its function is as follows. Required for the assembly and/or stability of the 40S ribosomal subunit. Required for the processing of the 20S rRNA-precursor to mature 18S rRNA in a late step of the maturation of 40S ribosomal subunits. The chain is Small ribosomal subunit protein uS2 from Meyerozyma guilliermondii (strain ATCC 6260 / CBS 566 / DSM 6381 / JCM 1539 / NBRC 10279 / NRRL Y-324) (Yeast).